The chain runs to 89 residues: Acylphosphatase (89 aa).

One can recognise an Acylphosphatase-like domain in the interval 3-89 (QKHLQVFGTV…SEDFSDFKSI (87 aa)). Active-site residues include arginine 18 and asparagine 36.

This sequence belongs to the acylphosphatase family.

The enzyme catalyses an acyl phosphate + H2O = a carboxylate + phosphate + H(+). This chain is Acylphosphatase (acyP), found in Staphylococcus haemolyticus (strain JCSC1435).